The primary structure comprises 38 residues: Photosystem II reaction center protein L (38 aa).

A helical membrane pass occupies residues 17 to 37 (GLYWGLLLIFVLAVLFSSYFF).

This sequence belongs to the PsbL family. As to quaternary structure, PSII is composed of 1 copy each of membrane proteins PsbA, PsbB, PsbC, PsbD, PsbE, PsbF, PsbH, PsbI, PsbJ, PsbK, PsbL, PsbM, PsbT, PsbX, PsbY, PsbZ, Psb30/Ycf12, at least 3 peripheral proteins of the oxygen-evolving complex and a large number of cofactors. It forms dimeric complexes.

It localises to the plastid. It is found in the chloroplast thylakoid membrane. Its function is as follows. One of the components of the core complex of photosystem II (PSII). PSII is a light-driven water:plastoquinone oxidoreductase that uses light energy to abstract electrons from H(2)O, generating O(2) and a proton gradient subsequently used for ATP formation. It consists of a core antenna complex that captures photons, and an electron transfer chain that converts photonic excitation into a charge separation. This subunit is found at the monomer-monomer interface and is required for correct PSII assembly and/or dimerization. In Staurastrum punctulatum (Green alga), this protein is Photosystem II reaction center protein L.